Reading from the N-terminus, the 166-residue chain is Cofilin-2 (166 aa).

At A2 the chain carries N-acetylalanine. At S3 the chain carries Phosphoserine. The ADF-H domain maps to 4 to 153 (GVTVNDEVIK…KDRSTLGEKL (150 aa)). At T6 the chain carries Phosphothreonine. The Nuclear localization signal motif lies at 30–34 (KKRKK).

This sequence belongs to the actin-binding proteins ADF family. Post-translationally, the phosphorylation of Ser-24 may prevent recognition of the nuclear localization signal.

The protein resides in the nucleus matrix. Its subcellular location is the cytoplasm. The protein localises to the cytoskeleton. In terms of biological role, controls reversibly actin polymerization and depolymerization in a pH-sensitive manner. It has the ability to bind G- and F-actin in a 1:1 ratio of cofilin to actin. It is the major component of intranuclear and cytoplasmic actin rods. The protein is Cofilin-2 (CFL2) of Bos taurus (Bovine).